The primary structure comprises 554 residues: Arginine--tRNA ligase (554 aa).

The 'HIGH' region motif lies at 129-139 (ANPTGPLHIGH).

Belongs to the class-I aminoacyl-tRNA synthetase family. In terms of assembly, monomer.

The protein localises to the cytoplasm. The catalysed reaction is tRNA(Arg) + L-arginine + ATP = L-arginyl-tRNA(Arg) + AMP + diphosphate. This chain is Arginine--tRNA ligase, found in Citrifermentans bemidjiense (strain ATCC BAA-1014 / DSM 16622 / JCM 12645 / Bem) (Geobacter bemidjiensis).